A 461-amino-acid polypeptide reads, in one-letter code: Xyloglucan 6-xylosyltransferase 2 (461 aa).

The Cytoplasmic segment spans residues 1 to 20; sequence MIERCLGAYRCRRIQRALRQ. A helical; Signal-anchor for type II membrane protein membrane pass occupies residues 21 to 40; the sequence is LKVTILCLLLTVVVLRSTIG. The Lumenal portion of the chain corresponds to 41 to 461; sequence AGKFGTPEQD…KAVKVQTNQV (421 aa). Positions 74-95 are disordered; that stretch reads QTGGDSSSGDGGGNSGGSNNYE. The N-linked (GlcNAc...) asparagine glycan is linked to Asn432.

The protein belongs to the glycosyltransferase 34 family. As to quaternary structure, homodimer. Interacts with XXT1 and XXT5. Interacts with FUT1 and XLT2.

The protein resides in the golgi apparatus membrane. It carries out the reaction Transfers an alpha-D-xylosyl residue from UDP-D-xylose to a glucose residue in xyloglucan, forming an alpha-(1-&gt;6)-D-xylosyl-D-glucose linkage.. Xylosyltransferase specific to UDP-D-xylose that accepts both cellopentaose and cellohexaose as substrates, with a better use of cellohexaose, to produce xyloglucan. Adds preferentially the first xylosyl residue to the fourth glucosyl residue from the reducing end of both acceptors. Transfer one xylose mainly to the second glucose residue from the non-reducing end. The acceptor should have a minimum of four glucose residues. Associates with other xyloglucan-synthesizing enzymes to form multiprotein complexes for xyloglucan synthesis in the Golgi. In Arabidopsis thaliana (Mouse-ear cress), this protein is Xyloglucan 6-xylosyltransferase 2 (XXT2).